A 426-amino-acid polypeptide reads, in one-letter code: Histidine--tRNA ligase (426 aa).

It belongs to the class-II aminoacyl-tRNA synthetase family.

The protein resides in the cytoplasm. The enzyme catalyses tRNA(His) + L-histidine + ATP = L-histidyl-tRNA(His) + AMP + diphosphate + H(+). In Saccharolobus islandicus (strain Y.G.57.14 / Yellowstone #1) (Sulfolobus islandicus), this protein is Histidine--tRNA ligase.